Consider the following 273-residue polypeptide: Large ribosomal subunit protein uL2 (273 aa).

2 disordered regions span residues 34–54 and 223–273; these read LEKK…TRHI and VAMN…RRRK.

The protein belongs to the universal ribosomal protein uL2 family. Part of the 50S ribosomal subunit. Forms a bridge to the 30S subunit in the 70S ribosome.

One of the primary rRNA binding proteins. Required for association of the 30S and 50S subunits to form the 70S ribosome, for tRNA binding and peptide bond formation. It has been suggested to have peptidyltransferase activity; this is somewhat controversial. Makes several contacts with the 16S rRNA in the 70S ribosome. This is Large ribosomal subunit protein uL2 from Pseudomonas aeruginosa (strain LESB58).